The chain runs to 444 residues: MPFIANTDDDRRSMLQAIGVGSFEELIPDIPSEFCLKEALSLFPSMSEMEVASLLDRLASANRTSPDYVSFIGGGAYDHYIPAALKTIVSRSEFYTAYTPYQAEVSQGTLQAIYEYQSMICRLYGMSVANASLYDGATAMAEAVSMAMNVTGRSTVLVAGKIHPNTSAVLKTFIEAGGKASVVQNVLTDGVCDIAALESRMSDQIAAVIVQQPNFYGCLEDVEAIGALARSHGALFIVSADPVSLGLLNAPGRYGADIAVGEGQPLGSALNFGGPYLGIFAVAEKYVRKIPGRLVGMTKDRDGEDGFILTLQTREQHIRREKATSNICTNQALNALQAVVYLSLMGKDGLCQVAEHCLQKAHYLADKIADLPGYSLRFAGPFFREFVVNTPVDASVVVNTMMEKGFFAGYDLGIHDDSGLLIAVTEKRSRAEMDSFVENLGAIS.

Belongs to the GcvP family. N-terminal subunit subfamily. In terms of assembly, the glycine cleavage system is composed of four proteins: P, T, L and H. In this organism, the P 'protein' is a heterodimer of two subunits.

The enzyme catalyses N(6)-[(R)-lipoyl]-L-lysyl-[glycine-cleavage complex H protein] + glycine + H(+) = N(6)-[(R)-S(8)-aminomethyldihydrolipoyl]-L-lysyl-[glycine-cleavage complex H protein] + CO2. The glycine cleavage system catalyzes the degradation of glycine. The P protein binds the alpha-amino group of glycine through its pyridoxal phosphate cofactor; CO(2) is released and the remaining methylamine moiety is then transferred to the lipoamide cofactor of the H protein. This is Probable glycine dehydrogenase (decarboxylating) subunit 1 from Prosthecochloris aestuarii (strain DSM 271 / SK 413).